The chain runs to 307 residues: Pantothenate kinase (307 aa).

90-97 provides a ligand contact to ATP; sequence GSVAVGKS.

This sequence belongs to the prokaryotic pantothenate kinase family.

The protein resides in the cytoplasm. It catalyses the reaction (R)-pantothenate + ATP = (R)-4'-phosphopantothenate + ADP + H(+). It participates in cofactor biosynthesis; coenzyme A biosynthesis; CoA from (R)-pantothenate: step 1/5. This Levilactobacillus brevis (strain ATCC 367 / BCRC 12310 / CIP 105137 / JCM 1170 / LMG 11437 / NCIMB 947 / NCTC 947) (Lactobacillus brevis) protein is Pantothenate kinase.